We begin with the raw amino-acid sequence, 212 residues long: Orotate phosphoribosyltransferase (212 aa).

Residues R95, K99, H101, and 121-129 contribute to the 5-phospho-alpha-D-ribose 1-diphosphate site; that span reads DDLITTGGS. Position 125 (T125) interacts with orotate.

Belongs to the purine/pyrimidine phosphoribosyltransferase family. PyrE subfamily. Homodimer. It depends on Mg(2+) as a cofactor.

The enzyme catalyses orotidine 5'-phosphate + diphosphate = orotate + 5-phospho-alpha-D-ribose 1-diphosphate. It functions in the pathway pyrimidine metabolism; UMP biosynthesis via de novo pathway; UMP from orotate: step 1/2. In terms of biological role, catalyzes the transfer of a ribosyl phosphate group from 5-phosphoribose 1-diphosphate to orotate, leading to the formation of orotidine monophosphate (OMP). In Lactobacillus johnsonii (strain CNCM I-12250 / La1 / NCC 533), this protein is Orotate phosphoribosyltransferase.